Here is a 732-residue protein sequence, read N- to C-terminus: Guanylate cyclase soluble subunit alpha-2 (732 aa).

The interval Met1 to Ala58 is disordered. Residues Ser49–Ala58 show a composition bias toward low complexity. The Guanylate cyclase domain occupies Thr521–Glu648.

This sequence belongs to the adenylyl cyclase class-4/guanylyl cyclase family. As to quaternary structure, heterodimer of an alpha and a beta chain. Isoform 1 is expressed in fetal brain, liver, colon, endothelium and testis. Isoform 2 is expressed only in liver, colon and endothelium.

The protein localises to the cytoplasm. The enzyme catalyses GTP = 3',5'-cyclic GMP + diphosphate. Activated by nitric oxide in the presence of magnesium or manganese ions. In terms of biological role, has guanylyl cyclase on binding to the beta-1 subunit. Its function is as follows. Isoform 2 acts as a negative regulator of guanylyl cyclase activity as it forms non-functional heterodimers with the beta subunits. This chain is Guanylate cyclase soluble subunit alpha-2 (GUCY1A2), found in Homo sapiens (Human).